A 753-amino-acid chain; its full sequence is Lysyl oxidase homolog 3 (753 aa).

The signal sequence occupies residues 1-25 (MRPVSVWQWSPWGLLLCLLCSSCLG). SRCR domains follow at residues 44–145 (FRLA…VICK) and 169–282 (VRIR…VSCV). 6 cysteine pairs are disulfide-bonded: cysteine 70–cysteine 134, cysteine 83–cysteine 144, cysteine 114–cysteine 124, cysteine 201–cysteine 271, cysteine 214–cysteine 281, and cysteine 248–cysteine 258. An N-linked (GlcNAc...) asparagine glycan is attached at asparagine 111. Asparagine 266 carries N-linked (GlcNAc...) asparagine glycosylation. Over residues 290-302 (SSGQKKQQQSKPQ) the composition is skewed to low complexity. Positions 290-315 (SSGQKKQQQSKPQGEARVRLKGGAHP) are disordered. SRCR domains are found at residues 307 to 407 (VRLK…VRCN) and 417 to 525 (IRLS…VICS). Intrachain disulfides connect cysteine 332–cysteine 396, cysteine 345–cysteine 406, cysteine 376–cysteine 386, cysteine 446–cysteine 511, cysteine 459–cysteine 524, cysteine 492–cysteine 502, cysteine 554–cysteine 560, cysteine 606–cysteine 654, cysteine 638–cysteine 644, cysteine 666–cysteine 676, and cysteine 713–cysteine 727. N-linked (GlcNAc...) asparagine glycans are attached at residues asparagine 390 and asparagine 481. The segment at 529–732 (SDLLLHSALV…WVHNCHIGDA (204 aa)) is lysyl-oxidase like. Cu cation contacts are provided by histidine 607, histidine 609, and histidine 611. Asparagine 625 carries an N-linked (GlcNAc...) asparagine glycan. Positions 634–670 (KASFCLEDTECQEDVSKRYECANFGEQGITVGCWDLY) form a cross-link, lysine tyrosylquinone (Lys-Tyr). The residue at position 670 (tyrosine 670) is a 2',4',5'-topaquinone.

The protein belongs to the lysyl oxidase family. As to quaternary structure, interacts with STAT3. Cu cation serves as cofactor. Lysine tyrosylquinone residue is required as a cofactor. In terms of processing, the lysine tyrosylquinone cross-link (LTQ) is generated by condensation of the epsilon-amino group of a lysine with a topaquinone produced by oxidation of tyrosine. Isoform 1: Predominantly detected in the heart, placenta, lung, and small intestine. Isoform 2: Highly detected in the kidney, pancreas, spleen, and thymus, and is absent in lung. In eye, present in all layers of corneas as well as in the limbus and conjunctiva (at protein level).

It localises to the secreted. Its subcellular location is the extracellular space. The protein localises to the cytoplasm. It is found in the nucleus. The catalysed reaction is L-lysyl-[protein] + O2 + H2O = (S)-2-amino-6-oxohexanoyl-[protein] + H2O2 + NH4(+). The enzyme catalyses N(6)-acetyl-L-lysyl-[protein] + O2 + H2O = acetamide + (S)-2-amino-6-oxohexanoyl-[protein] + H2O2. Its function is as follows. Protein-lysine 6-oxidase that mediates the oxidation of peptidyl lysine residues to allysine in target proteins. Catalyzes the post-translational oxidative deamination of peptidyl lysine residues in precursors of elastin and different types of collagens, a prerequisite in the formation of cross-links between collagens and elastin. Required for somite boundary formation by catalyzing oxidation of fibronectin (FN1), enhancing integrin signaling in myofibers and their adhesion to the myotendinous junction (MTJ). Acts as a regulator of inflammatory response by inhibiting differentiation of naive CD4(+) T-cells into T-helper Th17 or regulatory T-cells (Treg): acts by interacting with STAT3 in the nucleus and catalyzing both deacetylation and oxidation of lysine residues on STAT3, leading to disrupt STAT3 dimerization and inhibit STAT3 transcription activity. Oxidation of lysine residues to allysine on STAT3 preferentially takes place on lysine residues that are acetylated. Also able to catalyze deacetylation of lysine residues on STAT3. Shows protein-lysine 6-oxidase activity toward elastin and different types of collagens, with the highest activity toward collagen type VIII. Functionally, shows protein-lysine 6-oxidase activity toward elastin and different types of collagens, with the highest activity toward collagen type IV. The sequence is that of Lysyl oxidase homolog 3 from Homo sapiens (Human).